We begin with the raw amino-acid sequence, 207 residues long: Cyclin-dependent kinase 2-interacting protein (207 aa).

Residues 78-99 adopt a coiled-coil conformation; it reads TDKVELDRLCSELLQTIENMEK.

This sequence belongs to the CINP family. In terms of assembly, homodimer. Part of the 55LCC heterohexameric ATPase complex.

It is found in the nucleus. In terms of biological role, component of the DNA replication complex, which interacts with two kinases, CDK2 and CDC7, thereby providing a functional and physical link between CDK2 and CDC7 during firing of the origins of replication. Regulates ATR-mediated checkpoint signaling in response to DNA damage. Part of the 55LCC heterohexameric ATPase complex which is chromatin-associated and promotes replisome proteostasis to maintain replication fork progression and genome stability. Required for replication fork progression, sister chromatid cohesion, and chromosome stability. The ATPase activity is specifically enhanced by replication fork DNA and is coupled to cysteine protease-dependent cleavage of replisome substrates in response to replication fork damage. Uses ATPase activity to process replisome substrates in S-phase, facilitating their proteolytic turnover from chromatin to ensure DNA replication and mitotic fidelity. As part of 55LCC complex, also involved in the cytoplasmic maturation steps of pre-60S ribosomal particles by promoting the release of shuttling protein RSL24D1/RLP24 from the pre-ribosomal particles. The chain is Cyclin-dependent kinase 2-interacting protein (cinp) from Xenopus laevis (African clawed frog).